We begin with the raw amino-acid sequence, 1025 residues long: Myosin phosphatase Rho-interacting protein (1025 aa).

The tract at residues S2–T383 is interaction with F-actin. Residues K43 to R150 form the PH 1 domain. 2 disordered regions span residues N152 to Q302 and H317 to T383. A compositionally biased stretch (low complexity) spans S179 to S189. Phosphoserine is present on residues S192, S217, S218, S220, S224, and S226. Residues S217–L236 are compositionally biased toward low complexity. Residues P239–V263 are compositionally biased toward basic and acidic residues. Residues S265 and S269 each carry the phosphoserine modification. Basic and acidic residues predominate over residues E271 to E281. Residues L284–S294 show a composition bias toward pro residues. Residues S289 and S292 each carry the phosphoserine modification. Position 295 is a phosphothreonine (T295). S326 carries the post-translational modification Phosphoserine. The segment covering R332–T348 has biased composition (basic and acidic residues). Phosphothreonine is present on T348. 2 positions are modified to phosphoserine: S362 and S365. A PH 2 domain is found at L387–H483. Disordered regions lie at residues T485–W545 and V560–E591. Position 493 is a phosphoserine (S493). Composition is skewed to basic and acidic residues over residues P524–W545 and D567–R589. The interval A546 to S824 is interaction with RHOA. Phosphoserine is present on S619. T646 carries the post-translational modification Phosphothreonine. Phosphoserine is present on residues S663 and S800. Residues H673–S977 are a coiled coil. An interaction with PPP1R12A region spans residues S824–L879. 5 positions are modified to phosphoserine: S891, S977, S993, S1014, and S1016.

In terms of assembly, binds F-actin through its N-terminus. Interacts with MYZAP. Binds RHOA, PPP1R12A/MBS and PPP1R12C/MBS85 through adjacent coiled coil domains.

It is found in the cytoplasm. It localises to the cytoskeleton. Its function is as follows. Targets myosin phosphatase to the actin cytoskeleton. Required for the regulation of the actin cytoskeleton by RhoA and ROCK1. Depletion leads to an increased number of stress fibers in smooth muscle cells through stabilization of actin fibers by phosphorylated myosin. Overexpression of MRIP as well as its F-actin-binding region leads to disassembly of stress fibers in neuronal cells. The polypeptide is Myosin phosphatase Rho-interacting protein (MPRIP) (Homo sapiens (Human)).